Here is a 131-residue protein sequence, read N- to C-terminus: MYRAVTRQIEVTVEPNFLPEKSSVADGRWFWSYTVVITNTGEDTVKLRSRHWIITDGVGRQQEVRGEGVVGEQPVLAPGERFEYTSGVPLTTASGFMAGSYQMESASGEQFDIAVPAFSLDSPDGGKRVLN.

The ApaG domain maps to 3–127 (RAVTRQIEVT…FSLDSPDGGK (125 aa)).

The chain is Protein ApaG from Bradyrhizobium sp. (strain BTAi1 / ATCC BAA-1182).